The following is a 491-amino-acid chain: (1S)-1-hydroxy-luvungin A synthase CYP88A37 (491 aa).

Residues 5–25 (FSWLILALAIFIGTYAFVFGV) traverse the membrane as a helical segment. A heme-binding site is contributed by Cys439.

It belongs to the cytochrome P450 family. Heme serves as cofactor. Expressed in maturing fruits and in juice vesicles.

It localises to the membrane. It carries out the reaction luvungin A + reduced [NADPH--hemoprotein reductase] + O2 = (1S)-1-hydroxy-luvungin A + oxidized [NADPH--hemoprotein reductase] + H2O + H(+). It functions in the pathway secondary metabolite biosynthesis; terpenoid biosynthesis. Functionally, monooxygenase involved in the biosynthesis of limonoids triterpene natural products such as limonin, a compound with insecticidal activity responsible for the bitter taste in citrus. Catalyzes the conversion of luvungin A to (1S)-1-hydroxy-luvungin A. This is (1S)-1-hydroxy-luvungin A synthase CYP88A37 from Citrus sinensis (Sweet orange).